The following is a 448-amino-acid chain: Argininosuccinate synthase (448 aa).

Residues 17 to 25 and Ala-43 each bind ATP; that span reads AFSGGLDTS. Residue Tyr-99 coordinates L-citrulline. The ATP site is built by Gly-129 and Thr-131. Positions 131, 135, and 136 each coordinate L-aspartate. L-citrulline is bound at residue Asn-135. Asp-136 contributes to the ATP binding site. L-citrulline contacts are provided by Arg-139 and Ser-192. Asp-194 provides a ligand contact to ATP. Residues Thr-201, Glu-203, and Glu-280 each contribute to the L-citrulline site.

This sequence belongs to the argininosuccinate synthase family. Type 2 subfamily. Homotetramer.

It localises to the cytoplasm. The catalysed reaction is L-citrulline + L-aspartate + ATP = 2-(N(omega)-L-arginino)succinate + AMP + diphosphate + H(+). It participates in amino-acid biosynthesis; L-arginine biosynthesis; L-arginine from L-ornithine and carbamoyl phosphate: step 2/3. The chain is Argininosuccinate synthase from Enterobacter sp. (strain 638).